The primary structure comprises 153 residues: MAPKAEKKPAAKKPAEEEPAAEKAEKAPAGKKPKAEKRLPAGKGEKGSGEGKKAGRKKAKKSVETYKIYIFKVLKQVHPDIGISSKAMSIMNSFINDIFEKLAGESAKLARYNKKPTITSREIQTAVRLVLPGELAKHAVSEGTKAVTKFTSS.

Basic and acidic residues-rich tracts occupy residues 1 to 28 (MAPK…EKAP) and 36 to 53 (EKRL…EGKK). The interval 1–61 (MAPKAEKKPA…KKAGRKKAKK (61 aa)) is disordered. N6-acetyllysine occurs at positions 7 and 37. Residue lysine 149 forms a Glycyl lysine isopeptide (Lys-Gly) (interchain with G-Cter in ubiquitin) linkage.

Belongs to the histone H2B family. In terms of assembly, the nucleosome is a histone octamer containing two molecules each of H2A, H2B, H3 and H4 assembled in one H3-H4 heterotetramer and two H2A-H2B heterodimers. The octamer wraps approximately 147 bp of DNA. Can be acetylated to form H2BK6ac and H2BK33ac. In terms of processing, monoubiquitinated by BRE1 to form H2BK143ub1 and deubiquitinated by UBP26. Required for heterochromatic histone H3 di- and trimethylation at H3K4me. May give a specific tag for epigenetic transcriptional activation.

The protein localises to the nucleus. The protein resides in the chromosome. Its function is as follows. Core component of nucleosome. Nucleosomes wrap and compact DNA into chromatin, limiting DNA accessibility to the cellular machineries which require DNA as a template. Histones thereby play a central role in transcription regulation, DNA repair, DNA replication and chromosomal stability. DNA accessibility is regulated via a complex set of post-translational modifications of histones, also called histone code, and nucleosome remodeling. This chain is Histone H2B.8 (H2B.8), found in Oryza sativa subsp. indica (Rice).